Here is a 140-residue protein sequence, read N- to C-terminus: ATP synthase epsilon chain (140 aa).

It belongs to the ATPase epsilon chain family. As to quaternary structure, F-type ATPases have 2 components, CF(1) - the catalytic core - and CF(0) - the membrane proton channel. CF(1) has five subunits: alpha(3), beta(3), gamma(1), delta(1), epsilon(1). CF(0) has three main subunits: a, b and c.

It is found in the cell inner membrane. Functionally, produces ATP from ADP in the presence of a proton gradient across the membrane. In Xanthomonas axonopodis pv. citri (strain 306), this protein is ATP synthase epsilon chain.